The chain runs to 286 residues: Release factor glutamine methyltransferase (286 aa).

S-adenosyl-L-methionine contacts are provided by residues 120–124 (GTGSG), Asp-143, Trp-172, and Asn-187. Residue 187 to 190 (NPPY) participates in substrate binding.

The protein belongs to the protein N5-glutamine methyltransferase family. PrmC subfamily.

It catalyses the reaction L-glutaminyl-[peptide chain release factor] + S-adenosyl-L-methionine = N(5)-methyl-L-glutaminyl-[peptide chain release factor] + S-adenosyl-L-homocysteine + H(+). Functionally, methylates the class 1 translation termination release factors RF1/PrfA and RF2/PrfB on the glutamine residue of the universally conserved GGQ motif. The chain is Release factor glutamine methyltransferase from Gloeobacter violaceus (strain ATCC 29082 / PCC 7421).